The sequence spans 366 residues: Erythronate-4-phosphate dehydrogenase (366 aa).

Substrate is bound by residues Ser46 and Thr67. NAD(+) is bound by residues Asp147 and Thr175. Arg208 is an active-site residue. Asp228 lines the NAD(+) pocket. Glu233 is a catalytic residue. His250 functions as the Proton donor in the catalytic mechanism. Residue Gly253 coordinates NAD(+). Tyr254 contacts substrate.

This sequence belongs to the D-isomer specific 2-hydroxyacid dehydrogenase family. PdxB subfamily. In terms of assembly, homodimer.

It localises to the cytoplasm. It catalyses the reaction 4-phospho-D-erythronate + NAD(+) = (R)-3-hydroxy-2-oxo-4-phosphooxybutanoate + NADH + H(+). Its pathway is cofactor biosynthesis; pyridoxine 5'-phosphate biosynthesis; pyridoxine 5'-phosphate from D-erythrose 4-phosphate: step 2/5. In terms of biological role, catalyzes the oxidation of erythronate-4-phosphate to 3-hydroxy-2-oxo-4-phosphonooxybutanoate. This chain is Erythronate-4-phosphate dehydrogenase, found in Coxiella burnetii (strain RSA 331 / Henzerling II).